The sequence spans 198 residues: ATP synthase subunit b (198 aa).

The helical transmembrane segment at 25–45 (PLSELLIGTLAFGLLVAFFFW) threads the bilayer.

This sequence belongs to the ATPase B chain family. F-type ATPases have 2 components, F(1) - the catalytic core - and F(0) - the membrane proton channel. F(1) has five subunits: alpha(3), beta(3), gamma(1), delta(1), epsilon(1). F(0) has three main subunits: a(1), b(2) and c(10-14). The alpha and beta chains form an alternating ring which encloses part of the gamma chain. F(1) is attached to F(0) by a central stalk formed by the gamma and epsilon chains, while a peripheral stalk is formed by the delta and b chains.

The protein resides in the cell membrane. Functionally, f(1)F(0) ATP synthase produces ATP from ADP in the presence of a proton or sodium gradient. F-type ATPases consist of two structural domains, F(1) containing the extramembraneous catalytic core and F(0) containing the membrane proton channel, linked together by a central stalk and a peripheral stalk. During catalysis, ATP synthesis in the catalytic domain of F(1) is coupled via a rotary mechanism of the central stalk subunits to proton translocation. Component of the F(0) channel, it forms part of the peripheral stalk, linking F(1) to F(0). This is ATP synthase subunit b from Frankia alni (strain DSM 45986 / CECT 9034 / ACN14a).